A 309-amino-acid polypeptide reads, in one-letter code: L-lactate dehydrogenase (309 aa).

NAD(+)-binding positions include Val12, Asp33, Arg38, Tyr63, and 77 to 78 (GA). Substrate is bound by residues Gln80, Arg86, and 118-121 (NPVD). Residues 116–118 (ATN) and Ser141 each bind NAD(+). 146-149 (DSAR) is a binding site for substrate. The beta-D-fructose 1,6-bisphosphate site is built by Arg151 and His166. The active-site Proton acceptor is His173. Residue Tyr219 is modified to Phosphotyrosine. Thr228 lines the substrate pocket.

The protein belongs to the LDH/MDH superfamily. LDH family. Homotetramer.

It is found in the cytoplasm. It catalyses the reaction (S)-lactate + NAD(+) = pyruvate + NADH + H(+). The protein operates within fermentation; pyruvate fermentation to lactate; (S)-lactate from pyruvate: step 1/1. Its activity is regulated as follows. Allosterically activated by fructose 1,6-bisphosphate (FBP). In terms of biological role, catalyzes the conversion of lactate to pyruvate. In Nitratidesulfovibrio vulgaris (strain ATCC 29579 / DSM 644 / CCUG 34227 / NCIMB 8303 / VKM B-1760 / Hildenborough) (Desulfovibrio vulgaris), this protein is L-lactate dehydrogenase.